Consider the following 221-residue polypeptide: Sugar transporter SWEET1 (221 aa).

Transmembrane regions (helical) follow at residues 3–23 (AGGFLDSLIYGACVVFTLGMF), 42–62 (VQFLPFLTTEVNNLGWLSYGA), 68–88 (ILIVVNTVGAALQTLYILAYL), 96–116 (VVLLQTATLLGVLLLGYGYFW), 126–146 (LQLLGLFCSVFTISMYLSPLA), 160–180 (LSYPLTIATVLTSASWCLYGF), and 186–206 (YIMVSNFPGIVTSFIRFWLFW). In terms of domain architecture, MtN3/slv 1 spans 10 to 94 (LIYGACVVFT…LAYLHYCPRK (85 aa)). The region spanning 127–212 (QLLGLFCSVF…WLFWKYPQEQ (86 aa)) is the MtN3/slv 2 domain. Residues 149–221 (AKVIQTKSTQ…QDRNYWFLQT (73 aa)) form a mediates interaction with TRPV2 region.

It belongs to the SWEET sugar transporter family. In terms of assembly, interacts with TRPV2; the interaction probably occurs intracellularly and depends on TRPV2 N-glycosylation.

It localises to the golgi apparatus membrane. The protein localises to the cell membrane. In terms of biological role, mediates sugar transport across membranes. May stimulate V(D)J recombination by the activation of RAG1. The sequence is that of Sugar transporter SWEET1 (SLC50A1) from Papio anubis (Olive baboon).